We begin with the raw amino-acid sequence, 656 residues long: NADH-ubiquinone oxidoreductase chain 5 (656 aa).

The next 17 helical transmembrane spans lie at Ile5–Leu23, Ile30–Phe52, Leu81–Tyr103, Arg112–Thr129, Tyr133–Phe155, Phe168–Gly190, Leu200–Ala222, Val243–Arg262, Thr272–Phe294, Val301–Ser320, Ile324–Ile346, Pro367–Phe389, Ser409–Leu431, Ile452–Leu471, Phe514–Phe536, Leu607–Ile629, and Gln634–Phe653.

Belongs to the complex I subunit 5 family.

The protein resides in the mitochondrion inner membrane. It carries out the reaction a ubiquinone + NADH + 5 H(+)(in) = a ubiquinol + NAD(+) + 4 H(+)(out). Core subunit of the mitochondrial membrane respiratory chain NADH dehydrogenase (Complex I) that is believed to belong to the minimal assembly required for catalysis. Complex I functions in the transfer of electrons from NADH to the respiratory chain. The immediate electron acceptor for the enzyme is believed to be ubiquinone. This is NADH-ubiquinone oxidoreductase chain 5 (ND5) from Cryphonectria parasitica (Chestnut blight fungus).